The primary structure comprises 107 residues: MPTVTYVHPDGTKHEVEVPTGKRVMQAAIGAGIDGIVAECGGQAMCATCHVYVESPWADKFPSISEEEDEMLDDTVSPRTEASRLSCQLVVSDDVDGLIVRLPEEQV.

The 2Fe-2S ferredoxin-type domain maps to 2-106 (PTVTYVHPDG…GLIVRLPEEQ (105 aa)). [2Fe-2S] cluster is bound by residues C40, C46, C49, and C87.

This sequence belongs to the adrenodoxin/putidaredoxin family. [2Fe-2S] cluster serves as cofactor.

In terms of biological role, ferredoxin-type protein which transfers electrons from rhodocoxin reductase to cytochrome CYP116 (ThcB), which is involved in the degradation of thiocarbamate herbicides. This Rhodococcus erythropolis (Arthrobacter picolinophilus) protein is Rhodocoxin (thcC).